Here is an 850-residue protein sequence, read N- to C-terminus: MRVREMQRNWQHLGRWGLLFLGILIICSAADKLWVTVYYGVPVWKEATTTLFCASDAKAYEREVHNVWATYACVPTDPSPQELVLGNVSEKFNMWKNNMVDQMHEDIISLWDESLKPCVKLTPLCVTLNCTKAIINVTSSNNTTLAPNVTISEEMKNCSFNITTEIRDKQKKEYALFYKLDVVQINNSNTSYRLINCNTSTLTQACPKVSFDPIPIHYCAPAGFAILKCNNKTFNGTGLCRNVSTVQCTHGIKPVVSTQLLLNGSLAEEKMIIRSENISDNTKTIIVQFKNPVKINCTRPNNNTRRSIHIGPGRAFYATGEIIGDTRKAHCNISEKQWYDTLIKIATEFKDQYNKTVGFQPSAGGDLEITTHSFNCRGEFFYCNTTILFNHTRVNDILSNNHTRENDTITLPCRIKQIVNMWQRVGQAMYAPPIAGKIQCNSNITGLLLTIDGGEGNESETLRPGGGDMRDNWRSELYKYKVVKIEPLGVAPTKAKRQVVQREKRAVGMGAMFLGFLGAAGSTMGAASITLTVQARNLLSGIVQQQSNLLKAIEAQQHLLQLTVWGIKQLQARILAVERYLKDQQLLGIWGCSGKLICPTTVPWNLSWSNKSQDEIWGNMTWMEWEKEIGNYTDTIYRLIESAQNQQEKNEQDLLALDKWDNLWNWFSITRWLWYIEIFIMIIGSLIGLRIVFTVLSIINRVRQGYSPLSLQTLIPNSRGPERPGGIEEEGGEQDKDRSIRLVSGFLALAWDDFRSLCVFSYHCLRNFILIAARTVDKGLKRGWEVLKYLWNLAQYWGQELKNSAISLLDRTAIAVAEGTDRIIEILQRAGRAVLNIPRRIRQGLERALL.

The N-terminal stretch at methionine 1–aspartate 31 is a signal peptide. Over lysine 32–isoleucine 678 the chain is Extracellular. A disulfide bond links cysteine 53 and cysteine 73. Residues asparagine 87, asparagine 129, asparagine 136, asparagine 141, asparagine 142, asparagine 148, asparagine 157, asparagine 161, asparagine 186, asparagine 189, asparagine 198, asparagine 231, asparagine 235, asparagine 242, asparagine 263, asparagine 277, asparagine 296, asparagine 302, asparagine 332, and asparagine 354 are each glycosylated (N-linked (GlcNAc...) asparagine; by host). Cystine bridges form between cysteine 118/cysteine 206, cysteine 125/cysteine 197, cysteine 130/cysteine 158, cysteine 219/cysteine 248, and cysteine 229/cysteine 240. The tract at residues cysteine 130–asparagine 157 is V1. Residues cysteine 158–cysteine 197 form a V2 region. The segment at cysteine 297–histidine 330 is V3. Cysteine 297 and cysteine 331 are joined by a disulfide. Positions serine 362–histidine 372 are CD4-binding loop. 2 disulfide bridges follow: cysteine 376–cysteine 440 and cysteine 383–cysteine 413. Residues cysteine 383–cysteine 413 are V4. Asparagine 384, asparagine 390, asparagine 401, asparagine 406, asparagine 443, and asparagine 457 each carry an N-linked (GlcNAc...) asparagine; by host glycan. 2 V5 regions span residues glycine 456–glycine 465 and glutamate 458–glycine 465. The segment at alanine 506–alanine 526 is fusion peptide. The segment at lysine 568–leucine 586 is immunosuppression. A disulfide bond links cysteine 592 and cysteine 598. 4 N-linked (GlcNAc...) asparagine; by host glycosylation sites follow: asparagine 605, asparagine 610, asparagine 619, and asparagine 631. Residues lysine 627 to aspartate 661 are a coiled coil. Residues alanine 656–glutamate 677 form an MPER; binding to GalCer region. A helical membrane pass occupies residues phenylalanine 679–isoleucine 699. Over asparagine 700–leucine 850 the chain is Cytoplasmic. Residues tyrosine 706 to leucine 709 carry the YXXL motif; contains endocytosis signal motif. Residues proline 716–lysine 736 form a disordered region. A lipid anchor (S-palmitoyl cysteine; by host) is attached at cysteine 758. Positions leucine 849–leucine 850 match the Di-leucine internalization motif motif.

Belongs to the HIV-1 env protein family. In terms of assembly, the mature envelope protein (Env) consists of a homotrimer of non-covalently associated gp120-gp41 heterodimers. The resulting complex protrudes from the virus surface as a spike. There seems to be as few as 10 spikes on the average virion. Interacts with host CD4, CCR5 and CXCR4. Gp120 also interacts with the C-type lectins CD209/DC-SIGN and CLEC4M/DC-SIGNR (collectively referred to as DC-SIGN(R)). Gp120 and gp41 interact with GalCer. Gp120 interacts with host ITGA4/ITGB7 complex; on CD4+ T-cells, this interaction results in rapid activation of integrin ITGAL/LFA-1, which facilitates efficient cell-to-cell spreading of HIV-1. Gp120 interacts with cell-associated heparan sulfate; this interaction increases virus infectivity on permissive cells and may be involved in infection of CD4- cells. As to quaternary structure, the mature envelope protein (Env) consists of a homotrimer of non-covalently associated gp120-gp41 heterodimers. The resulting complex protrudes from the virus surface as a spike. There seems to be as few as 10 spikes on the average virion. In terms of processing, highly glycosylated by host. The high number of glycan on the protein is reffered to as 'glycan shield' because it contributes to hide protein sequence from adaptive immune system. Palmitoylation of the transmembrane protein and of Env polyprotein (prior to its proteolytic cleavage) is essential for their association with host cell membrane lipid rafts. Palmitoylation is therefore required for envelope trafficking to classical lipid rafts, but not for viral replication. Post-translationally, specific enzymatic cleavages in vivo yield mature proteins. Envelope glycoproteins are synthesized as an inactive precursor that is heavily N-glycosylated and processed likely by host cell furin in the Golgi to yield the mature SU and TM proteins. The cleavage site between SU and TM requires the minimal sequence [KR]-X-[KR]-R. About 2 of the 9 disulfide bonds of gp41 are reduced by P4HB/PDI, following binding to CD4 receptor.

It is found in the virion membrane. Its subcellular location is the host cell membrane. It localises to the host endosome membrane. Its function is as follows. Oligomerizes in the host endoplasmic reticulum into predominantly trimers. In a second time, gp160 transits in the host Golgi, where glycosylation is completed. The precursor is then proteolytically cleaved in the trans-Golgi and thereby activated by cellular furin or furin-like proteases to produce gp120 and gp41. Functionally, attaches the virus to the host lymphoid cell by binding to the primary receptor CD4. This interaction induces a structural rearrangement creating a high affinity binding site for a chemokine coreceptor like CXCR4 and/or CCR5. Acts as a ligand for CD209/DC-SIGN and CLEC4M/DC-SIGNR, which are respectively found on dendritic cells (DCs), and on endothelial cells of liver sinusoids and lymph node sinuses. These interactions allow capture of viral particles at mucosal surfaces by these cells and subsequent transmission to permissive cells. HIV subverts the migration properties of dendritic cells to gain access to CD4+ T-cells in lymph nodes. Virus transmission to permissive T-cells occurs either in trans (without DCs infection, through viral capture and transmission), or in cis (following DCs productive infection, through the usual CD4-gp120 interaction), thereby inducing a robust infection. In trans infection, bound virions remain infectious over days and it is proposed that they are not degraded, but protected in non-lysosomal acidic organelles within the DCs close to the cell membrane thus contributing to the viral infectious potential during DCs' migration from the periphery to the lymphoid tissues. On arrival at lymphoid tissues, intact virions recycle back to DCs' cell surface allowing virus transmission to CD4+ T-cells. In terms of biological role, acts as a class I viral fusion protein. Under the current model, the protein has at least 3 conformational states: pre-fusion native state, pre-hairpin intermediate state, and post-fusion hairpin state. During fusion of viral and target intracellular membranes, the coiled coil regions (heptad repeats) assume a trimer-of-hairpins structure, positioning the fusion peptide in close proximity to the C-terminal region of the ectodomain. The formation of this structure appears to drive apposition and subsequent fusion of viral and target cell membranes. Complete fusion occurs in host cell endosomes and is dynamin-dependent, however some lipid transfer might occur at the plasma membrane. The virus undergoes clathrin-dependent internalization long before endosomal fusion, thus minimizing the surface exposure of conserved viral epitopes during fusion and reducing the efficacy of inhibitors targeting these epitopes. Membranes fusion leads to delivery of the nucleocapsid into the cytoplasm. The chain is Envelope glycoprotein gp160 from Human immunodeficiency virus type 1 group M subtype F2 (isolate MP257) (HIV-1).